Consider the following 149-residue polypeptide: 3-dehydroquinate dehydratase (149 aa).

The active-site Proton acceptor is Tyr23. The substrate site is built by Asn75, His81, and Asp88. The Proton donor role is filled by His101. Substrate contacts are provided by residues 102-103 and Arg112; that span reads MS.

Belongs to the type-II 3-dehydroquinase family. As to quaternary structure, homododecamer.

It catalyses the reaction 3-dehydroquinate = 3-dehydroshikimate + H2O. It functions in the pathway metabolic intermediate biosynthesis; chorismate biosynthesis; chorismate from D-erythrose 4-phosphate and phosphoenolpyruvate: step 3/7. Its function is as follows. Catalyzes a trans-dehydration via an enolate intermediate. The chain is 3-dehydroquinate dehydratase from Pelobacter propionicus (strain DSM 2379 / NBRC 103807 / OttBd1).